A 341-amino-acid chain; its full sequence is Heat-shock protein cognate (HSC) co-chaperone sgt12 (341 aa).

The tract at residues 86–123 is disordered; that stretch reads PSKEPASAGAQAQSTEAQQPKAGAPTPESDKLKSEGNA. 3 TPR repeats span residues 114-147, 148-181, and 182-215; these read SDKL…APAN, PIYL…DPKY, and SKAW…EGNG. Residues 232–280 are disordered; sequence EEANRGAEPPADDVDDAAGASRGAGGMPDLSSLASMLGGRGGGGGGMPD. Over residues 269–278 the composition is skewed to gly residues; it reads GGRGGGGGGM.

The protein belongs to the SGT family. Forms homodimers. Component of the get4/get5/sgt2 sorting complex. Dimers of sgt2 bind directly a single get5. Binds HSC family members ssa1, sse1, hsp104 and hsc82 via its TPR domain.

It localises to the cytoplasm. In terms of biological role, heat-shock protein cognate (HSC) co-chaperone that preferentially binds endoplasmic reticulum-destined tail-anchored (TA) proteins and directs them to the GET (guided entry of TA proteins) pathway via get4 and get5. Get4 and get5 form an obligate complex that catalyzes the transfer of tail-anchored proteins destined to the endoplasmic reticulum from sgt2 to the cytosolic targeting factor which then targets the TA protein to the ER membrane via get1/get2. This chain is Heat-shock protein cognate (HSC) co-chaperone sgt12, found in Aspergillus fumigatus (strain ATCC MYA-4609 / CBS 101355 / FGSC A1100 / Af293) (Neosartorya fumigata).